A 914-amino-acid chain; its full sequence is Valine--tRNA ligase (914 aa).

Positions 47 to 57 match the 'HIGH' region motif; that stretch reads PYPTGELHMGH. Residues 552-556 carry the 'KMSKS' region motif; sequence KMSKS. K555 contacts ATP.

This sequence belongs to the class-I aminoacyl-tRNA synthetase family. ValS type 2 subfamily.

It is found in the cytoplasm. It catalyses the reaction tRNA(Val) + L-valine + ATP = L-valyl-tRNA(Val) + AMP + diphosphate. Its function is as follows. Catalyzes the attachment of valine to tRNA(Val). As ValRS can inadvertently accommodate and process structurally similar amino acids such as threonine, to avoid such errors, it has a 'posttransfer' editing activity that hydrolyzes mischarged Thr-tRNA(Val) in a tRNA-dependent manner. This chain is Valine--tRNA ligase, found in Methanopyrus kandleri (strain AV19 / DSM 6324 / JCM 9639 / NBRC 100938).